The chain runs to 358 residues: Adenosine deaminase (358 aa).

Positions 14 and 16 each coordinate Zn(2+). Histidine 16, aspartate 18, and glycine 183 together coordinate substrate. Histidine 212 provides a ligand contact to Zn(2+). The active-site Proton donor is glutamate 215. Zn(2+) is bound at residue aspartate 294. Position 295 (aspartate 295) interacts with substrate.

Belongs to the metallo-dependent hydrolases superfamily. Adenosine and AMP deaminases family. Requires Zn(2+) as cofactor.

It localises to the cell membrane. The protein localises to the cell junction. It is found in the cytoplasmic vesicle lumen. Its subcellular location is the cytoplasm. The protein resides in the lysosome. It carries out the reaction adenosine + H2O + H(+) = inosine + NH4(+). It catalyses the reaction 2'-deoxyadenosine + H2O + H(+) = 2'-deoxyinosine + NH4(+). Its function is as follows. Catalyzes the hydrolytic deamination of adenosine and 2-deoxyadenosine. Plays an important role in purine metabolism and in adenosine homeostasis. Modulates signaling by extracellular adenosine, and so contributes indirectly to cellular signaling events. May act as a positive regulator of T-cell coactivation. This chain is Adenosine deaminase (ada), found in Xenopus tropicalis (Western clawed frog).